A 59-amino-acid chain; its full sequence is Large ribosomal subunit protein uL30 (59 aa).

The protein belongs to the universal ribosomal protein uL30 family. As to quaternary structure, part of the 50S ribosomal subunit.

The protein is Large ribosomal subunit protein uL30 of Enterococcus faecalis (strain ATCC 700802 / V583).